The chain runs to 1086 residues: MGSEDHSAQNPSCKIMTFRPTMDEFRDFNRYVAYIESQGAHRAGLAKIIPPKEWKPRQTYDDIDDVVIPAPIQQVVTGQSGLFTQYNIQKKAMTVGEYRRLANSEKYCTPRHQDFDDLERKYWKNLTFVSPIYGADISGSLYDDDVAQWNIGNLRTILDMVERECGTIIEGVNTPYLYFGMWKTTFAWHTEDMDLYSINYLHFGEPKSWYAIPPEHGKRLERLAIGFFPGSSQGCDAFLRHKMTLISPIILKKYGIPFSRITQEAGEFMITFPYGYHAGFNHGFNCAESTNFATLRWIDYGKVATQCTCRKDMVKISMDVFVRILQPERYEQWKQGRDLTVLDHTRPTALSSPELSSWSASRTSIKAKLLRRQISVKESRPWRKAEEERRREPTRRPGPASHRRRSQPKKSKPEESRSPGEATAGVSTLDEARGCSRGEAMPEDEEEEELLPSQGHEAEGVEEDGRGKPRPTKARNKKKTPSPSSPPLLSAPPALFPTEEVLRPPPQPKSPGPAMGPMAAEGGPPPTPLNVVPPGAPVEEAEVRPRPIIPMLYVLPRTSSTDGDREHSAHAQLAPMELGPEEENQAQAGDSQGTTPFSKLKVEIKKSRRHPLGRPPTRSPLSVVKQEASSDEEAFLFSGEDDVTDPEALRSLLSLQWKNKAASFQAERKFNAAAALSEPYCAICTLFYPYSQSVQTERDSAVQPPSKSGQRTRPLIPEMCFTSSGENTEPLPANSYVGEDGTSPLISCAHCCLQVHASCYGVRPELAKEGWTCSRCAAHAWTAECCLCNLRGGALQRTTEHRWIHVICAIAVPEVRFLNVIERNPVDVSAIPEQRWKLKCIYCRKRMKRVSGACIQCSYEHCSTSFHVTCAHAAGVLMEPDDWPYVVSITCLKHRASGAGGQLLRTVSLGQIVITKNRNGLYYRCRVIGTTAQTFYEVNFDDGSYSDNLYPESITSRDCLRLGPPPEGELVELRWTDGNLYRARFISMATSLIYQVEFEDGSQLTVKRGDIFTLEEELPKRVRSRLSLSTGTPQEPSFSGDDVKAAKRPRVASVLATTTEDTGRSPEYLSFMESLLQAQGRPGAPF.

Positions 15-57 (IMTFRPTMDEFRDFNRYVAYIESQGAHRAGLAKIIPPKEWKPR) constitute a JmjN domain. Y133 is a 2-oxoglutarate binding site. Residues 146 to 309 (VAQWNIGNLR…YGKVATQCTC (164 aa)) form the JmjC domain. The Fe cation site is built by H189 and E191. Residues N199 and K207 each contribute to the 2-oxoglutarate site. Zn(2+)-binding residues include C235 and H241. K242 provides a ligand contact to 2-oxoglutarate. Fe cation is bound at residue H277. Zn(2+) is bound by residues C307 and C309. The segment covering 379 to 395 (SRPWRKAEEERRREPTR) has biased composition (basic and acidic residues). Disordered stretches follow at residues 379 to 536 (SRPW…PPGA) and 575 to 624 (PMEL…LSVV). Residues 401-410 (SHRRRSQPKK) are compositionally biased toward basic residues. Residues 441-450 (MPEDEEEEEL) show a composition bias toward acidic residues. Residues 456-467 (HEAEGVEEDGRG) are compositionally biased toward basic and acidic residues. Positions 468–480 (KPRPTKARNKKKT) are enriched in basic residues. Over residues 512 to 522 (GPAMGPMAAEG) the composition is skewed to low complexity. Over residues 585–597 (QAQAGDSQGTTPF) the composition is skewed to polar residues. K599 bears the N6-acetyllysine mark. The segment at 719 to 777 (MCFTSSGENTEPLPANSYVGEDGTSPLISCAHCCLQVHASCYGVRPELAKEGWTCSRCA) adopts a PHD-type 1 zinc-finger fold. The C2HC pre-PHD-type zinc-finger motif lies at 782-815 (TAECCLCNLRGGALQRTTEHRWIHVICAIAVPEV). A PHD-type 2 zinc finger spans residues 838–895 (LKCIYCRKRMKRVSGACIQCSYEHCSTSFHVTCAHAAGVLMEPDDWPYVVSITCLKHR). Tudor domains follow at residues 905–962 (RTVS…CLRL) and 963–1019 (GPPP…EELP). The tract at residues 1024–1043 (SRLSLSTGTPQEPSFSGDDV) is disordered. Polar residues predominate over residues 1026-1037 (LSLSTGTPQEPS).

This sequence belongs to the JHDM3 histone demethylase family. Requires Fe(2+) as cofactor.

The protein resides in the nucleus. The catalysed reaction is N(6),N(6),N(6)-trimethyl-L-lysyl(9)-[histone H3] + 2 2-oxoglutarate + 2 O2 = N(6)-methyl-L-lysyl(9)-[histone H3] + 2 formaldehyde + 2 succinate + 2 CO2. In terms of biological role, histone demethylase that specifically demethylates 'Lys-9' of histone H3, thereby playing a role in histone code. Does not demethylate histone H3 'Lys-4', H3 'Lys-27', H3 'Lys-36' nor H4 'Lys-20'. Only able to demethylate trimethylated H3 'Lys-9', with a weaker activity than KDM4A, KDM4C and KDM4D. Demethylation of Lys residue generates formaldehyde and succinate. Plays a critical role in the development of the central nervous system (CNS). This chain is Lysine-specific demethylase 4B (Kdm4b), found in Mus musculus (Mouse).